The chain runs to 650 residues: p-hydroxybenzoic acid efflux pump subunit AaeB (650 aa).

A run of 11 helical transmembrane segments spans residues F7–L27, W32–P52, G61–A81, V87–I107, L115–L135, E148–I168, L365–I385, F402–P422, Q426–I446, Q450–M470, and I478–I498.

Belongs to the aromatic acid exporter ArAE (TC 2.A.85) family.

It localises to the cell inner membrane. Functionally, forms an efflux pump with AaeA. Could function as a metabolic relief valve, allowing to eliminate certain compounds when they accumulate to high levels in the cell. The protein is p-hydroxybenzoic acid efflux pump subunit AaeB of Pantoea ananatis (strain LMG 20103).